The following is a 105-amino-acid chain: Flagellar transcriptional regulator FlhD (105 aa).

This sequence belongs to the FlhD family. As to quaternary structure, homodimer; disulfide-linked. Forms a heterohexamer composed of two FlhC and four FlhD subunits. Each FlhC binds a FlhD dimer, forming a heterotrimer, and a hexamer assembles by dimerization of two heterotrimers.

The protein resides in the cytoplasm. Its function is as follows. Functions in complex with FlhC as a master transcriptional regulator that regulates transcription of several flagellar and non-flagellar operons by binding to their promoter region. Activates expression of class 2 flagellar genes, including fliA, which is a flagellum-specific sigma factor that turns on the class 3 genes. Also regulates genes whose products function in a variety of physiological pathways. This Cupriavidus necator (strain ATCC 17699 / DSM 428 / KCTC 22496 / NCIMB 10442 / H16 / Stanier 337) (Ralstonia eutropha) protein is Flagellar transcriptional regulator FlhD.